A 366-amino-acid polypeptide reads, in one-letter code: Carbamoyl phosphate synthase small chain (366 aa).

The CPSase stretch occupies residues 1–171 (MKKRKLILED…KPYVVPGRGL (171 aa)). Residues Ser-46, Gly-220, and Gly-222 each coordinate L-glutamine. In terms of domain architecture, Glutamine amidotransferase type-1 spans 172 to 359 (RVVMVDFGAK…LNLIKASKVK (188 aa)). Residue Cys-247 is the Nucleophile of the active site. 4 residues coordinate L-glutamine: Leu-248, Gln-251, Asn-289, and Tyr-292. Residues His-332 and Glu-334 contribute to the active site.

Belongs to the CarA family. Composed of two chains; the small (or glutamine) chain promotes the hydrolysis of glutamine to ammonia, which is used by the large (or ammonia) chain to synthesize carbamoyl phosphate. Tetramer of heterodimers (alpha,beta)4.

It carries out the reaction hydrogencarbonate + L-glutamine + 2 ATP + H2O = carbamoyl phosphate + L-glutamate + 2 ADP + phosphate + 2 H(+). The enzyme catalyses L-glutamine + H2O = L-glutamate + NH4(+). Its pathway is amino-acid biosynthesis; L-arginine biosynthesis; carbamoyl phosphate from bicarbonate: step 1/1. It participates in pyrimidine metabolism; UMP biosynthesis via de novo pathway; (S)-dihydroorotate from bicarbonate: step 1/3. In terms of biological role, small subunit of the glutamine-dependent carbamoyl phosphate synthetase (CPSase). CPSase catalyzes the formation of carbamoyl phosphate from the ammonia moiety of glutamine, carbonate, and phosphate donated by ATP, constituting the first step of 2 biosynthetic pathways, one leading to arginine and/or urea and the other to pyrimidine nucleotides. The small subunit (glutamine amidotransferase) binds and cleaves glutamine to supply the large subunit with the substrate ammonia. This is Carbamoyl phosphate synthase small chain from Oceanobacillus iheyensis (strain DSM 14371 / CIP 107618 / JCM 11309 / KCTC 3954 / HTE831).